We begin with the raw amino-acid sequence, 95 residues long: Small ribosomal subunit protein bS16 (95 aa).

The protein belongs to the bacterial ribosomal protein bS16 family.

This is Small ribosomal subunit protein bS16 from Roseiflexus sp. (strain RS-1).